The primary structure comprises 134 residues: MTISLKVLAPNKNVYQGEAEEVILPSTTGQLGILPGHISLVTAIDIGVLRVRINSQWKSIALMGGFAEIESDEVIVLVNNAEIGSEINVQNAEQDLKEAKLAISKFSENEKNPEKIKALKEVSKAEARIQAAKN.

This sequence belongs to the ATPase epsilon chain family. F-type ATPases have 2 components, CF(1) - the catalytic core - and CF(0) - the membrane proton channel. CF(1) has five subunits: alpha(3), beta(3), gamma(1), delta(1), epsilon(1). CF(0) has three main subunits: a, b and c.

It localises to the cellular thylakoid membrane. Produces ATP from ADP in the presence of a proton gradient across the membrane. The polypeptide is ATP synthase epsilon chain (Prochlorococcus marinus (strain MIT 9301)).